The following is a 767-amino-acid chain: DNA topoisomerase 1 (767 aa).

Positions methionine 1–lysine 23 are enriched in basic and acidic residues. The tract at residues methionine 1–glutamate 201 is disordered. Serine 2 carries the N-acetylserine modification. Residues serine 2 and serine 10 each carry the phosphoserine modification. The segment covering histidine 24 to lysine 39 has biased composition (basic residues). The segment covering lysine 40–asparagine 110 has biased composition (basic and acidic residues). At serine 59 the chain carries Phosphoserine. Lysine 103 participates in a covalent cross-link: Glycyl lysine isopeptide (Lys-Gly) (interchain with G-Cter in SUMO2). Lysine 105 participates in a covalent cross-link: Glycyl lysine isopeptide (Lys-Gly) (interchain with G-Cter in SUMO); alternate. Lysine 105 participates in a covalent cross-link: Glycyl lysine isopeptide (Lys-Gly) (interchain with G-Cter in SUMO2); alternate. Serine 114 bears the Phosphoserine mark. Residue lysine 119 forms a Glycyl lysine isopeptide (Lys-Gly) (interchain with G-Cter in SUMO); alternate linkage. Lysine 119 is covalently cross-linked (Glycyl lysine isopeptide (Lys-Gly) (interchain with G-Cter in SUMO2); alternate). Residue lysine 119 forms a Glycyl lysine isopeptide (Lys-Gly) (interchain with G-Cter in SUMO1); alternate linkage. The segment covering proline 131 to glutamate 168 has biased composition (basic and acidic residues). Glycyl lysine isopeptide (Lys-Gly) (interchain with G-Cter in SUMO2) cross-links involve residues lysine 136 and lysine 150. A Glycyl lysine isopeptide (Lys-Gly) (interchain with G-Cter in SUMO); alternate cross-link involves residue lysine 155. Residue lysine 155 forms a Glycyl lysine isopeptide (Lys-Gly) (interchain with G-Cter in SUMO2); alternate linkage. Glycyl lysine isopeptide (Lys-Gly) (interchain with G-Cter in SUMO2) cross-links involve residues lysine 160 and lysine 166. Residue lysine 174 forms a Glycyl lysine isopeptide (Lys-Gly) (interchain with G-Cter in SUMO2); alternate linkage. Lysine 174 bears the N6-acetyllysine; alternate mark. The span at lysine 181–glutamate 201 shows a compositional bias: basic and acidic residues. Residue lysine 206 forms a Glycyl lysine isopeptide (Lys-Gly) (interchain with G-Cter in SUMO2) linkage. Position 282 is an N6-acetyllysine (lysine 282). Lysine 338 participates in a covalent cross-link: Glycyl lysine isopeptide (Lys-Gly) (interchain with G-Cter in SUMO2). 2 interaction with DNA regions span residues lysine 427 to tyrosine 428 and arginine 490 to lysine 495. Positions serine 434–phenylalanine 767 constitute a Topo IB-type catalytic domain. Serine 508 carries the phosphoserine; by CK2 modification. Residue lysine 551 forms a Glycyl lysine isopeptide (Lys-Gly) (interchain with G-Cter in SUMO2) linkage. The interval threonine 587 to lysine 589 is interaction with DNA. Residues lysine 644, lysine 702, and lysine 714 each participate in a glycyl lysine isopeptide (Lys-Gly) (interchain with G-Cter in SUMO2) cross-link. Tyrosine 725 (O-(3'-phospho-DNA)-tyrosine intermediate) is an active-site residue.

It belongs to the type IB topoisomerase family. Monomer. Interacts with ERCC6. Interacts with TPRN; TPRN interacts with a number of DNA damage response proteins, is recruited to sites of DNA damage and may play a role in DNA damage repair. In terms of processing, sumoylated. Lys-119 is the main site of sumoylation. Sumoylation plays a role in partitioning TOP1 between nucleoli and nucleoplasm. Levels are dramatically increased on camptothecin (CPT) treatment. Phosphorylation at Ser-508 by CK2 increases binding to supercoiled DNA and sensitivity to camptothecin.

Its subcellular location is the nucleus. The protein localises to the nucleolus. It localises to the nucleoplasm. It catalyses the reaction ATP-independent breakage of single-stranded DNA, followed by passage and rejoining.. Its activity is regulated as follows. Specifically inhibited by camptothecin (CPT), a plant alkaloid with antitumor activity. In terms of biological role, releases the supercoiling and torsional tension of DNA introduced during the DNA replication and transcription by transiently cleaving and rejoining one strand of the DNA duplex. Introduces a single-strand break via transesterification at a target site in duplex DNA. The scissile phosphodiester is attacked by the catalytic tyrosine of the enzyme, resulting in the formation of a DNA-(3'-phosphotyrosyl)-enzyme intermediate and the expulsion of a 5'-OH DNA strand. The free DNA strand then rotates around the intact phosphodiester bond on the opposing strand, thus removing DNA supercoils. Finally, in the religation step, the DNA 5'-OH attacks the covalent intermediate to expel the active-site tyrosine and restore the DNA phosphodiester backbone. Regulates the alternative splicing of tissue factor (F3) pre-mRNA in endothelial cells. Involved in the circadian transcription of the core circadian clock component BMAL1 by altering the chromatin structure around the ROR response elements (ROREs) on the BMAL1 promoter. In Chlorocebus aethiops (Green monkey), this protein is DNA topoisomerase 1 (TOP1).